Reading from the N-terminus, the 346-residue chain is Protein RecA (346 aa).

64–71 (GPESSGKT) contributes to the ATP binding site.

Belongs to the RecA family.

Its subcellular location is the cytoplasm. Functionally, can catalyze the hydrolysis of ATP in the presence of single-stranded DNA, the ATP-dependent uptake of single-stranded DNA by duplex DNA, and the ATP-dependent hybridization of homologous single-stranded DNAs. It interacts with LexA causing its activation and leading to its autocatalytic cleavage. In Bacillus pumilus (strain SAFR-032), this protein is Protein RecA.